A 205-amino-acid chain; its full sequence is Large ribosomal subunit protein uL3 (205 aa).

The protein belongs to the universal ribosomal protein uL3 family. In terms of assembly, part of the 50S ribosomal subunit. Forms a cluster with proteins L14 and L19.

In terms of biological role, one of the primary rRNA binding proteins, it binds directly near the 3'-end of the 23S rRNA, where it nucleates assembly of the 50S subunit. The sequence is that of Large ribosomal subunit protein uL3 from Flavobacterium johnsoniae (strain ATCC 17061 / DSM 2064 / JCM 8514 / BCRC 14874 / CCUG 350202 / NBRC 14942 / NCIMB 11054 / UW101) (Cytophaga johnsonae).